The following is a 45-amino-acid chain: Large ribosomal subunit protein bL34 (45 aa).

Positions 1–45 (MTKRTLGGTVRKQKRTSGFRARMRSHTGQNVIRARRKKGRHRLTV) are disordered. Composition is skewed to basic residues over residues 11-25 (RKQK…RMRS) and 33-45 (RARR…RLTV).

It belongs to the bacterial ribosomal protein bL34 family.

This is Large ribosomal subunit protein bL34 from Picosynechococcus sp. (strain ATCC 27264 / PCC 7002 / PR-6) (Agmenellum quadruplicatum).